The primary structure comprises 251 residues: Transcriptional cofactor Bfc (251 aa).

In terms of assembly, interacts with srp (via GATA-type Zn-finger domain); this interaction enhances srp binding to the promoter of crq/croquemort.

The protein localises to the nucleus. Functionally, transcriptional cofactor involved in efferocytosis. Together with srp mediates expression of the phagocytic receptor crq/croquemort in response to apoptotic cells, and is up-regulated by crq/croquemort in a positive feedback mechanism. Involved in macrophage engulfment and clearance of apoptotic cells during embryogenesis. This Drosophila melanogaster (Fruit fly) protein is Transcriptional cofactor Bfc.